Reading from the N-terminus, the 341-residue chain is L-threonine 3-dehydrogenase (341 aa).

Cys38 is a binding site for Zn(2+). Residues Thr40 and His43 each act as charge relay system in the active site. Zn(2+)-binding residues include His63, Glu64, Cys93, Cys96, Cys99, and Cys107. Residues Ile175, Asp195, Arg200, Leu262 to Ile264, and Ile286 to Tyr287 each bind NAD(+).

Belongs to the zinc-containing alcohol dehydrogenase family. In terms of assembly, homotetramer. Requires Zn(2+) as cofactor.

The protein resides in the cytoplasm. It catalyses the reaction L-threonine + NAD(+) = (2S)-2-amino-3-oxobutanoate + NADH + H(+). The protein operates within amino-acid degradation; L-threonine degradation via oxydo-reductase pathway; glycine from L-threonine: step 1/2. Functionally, catalyzes the NAD(+)-dependent oxidation of L-threonine to 2-amino-3-ketobutyrate. The polypeptide is L-threonine 3-dehydrogenase (Shewanella sp. (strain W3-18-1)).